Reading from the N-terminus, the 458-residue chain is uncharacterized protein (458 aa).

In terms of domain architecture, TRAM spans 8–66 (PVEKNEFIDVVFEDLTHDGAGVAKVKGYPIFVKNGLPGEEAQIKIIKVKKNFAFGRLMK). The [4Fe-4S] cluster site is built by cysteine 79, cysteine 85, cysteine 88, and cysteine 166. S-adenosyl-L-methionine contacts are provided by glutamine 290, tyrosine 319, glutamate 340, and aspartate 388. The active-site Nucleophile is cysteine 415.

This sequence belongs to the class I-like SAM-binding methyltransferase superfamily. RNA M5U methyltransferase family.

This is an uncharacterized protein from Bacillus cereus (strain ATCC 14579 / DSM 31 / CCUG 7414 / JCM 2152 / NBRC 15305 / NCIMB 9373 / NCTC 2599 / NRRL B-3711).